Reading from the N-terminus, the 201-residue chain is Recombination protein RecR (201 aa).

The C4-type zinc-finger motif lies at 60 to 75; sequence CSCCGNVDTSDPCTIC. Residues 83–178 form the Toprim domain; the sequence is ATLIVVEDVS…RVTRLAHGVP (96 aa).

The protein belongs to the RecR family.

Functionally, may play a role in DNA repair. It seems to be involved in an RecBC-independent recombinational process of DNA repair. It may act with RecF and RecO. The chain is Recombination protein RecR from Brucella melitensis biotype 2 (strain ATCC 23457).